The chain runs to 296 residues: GTPase Era (296 aa).

One can recognise an Era-type G domain in the interval 7–174 (KCSMNAIVGT…INYLCEISPS (168 aa)). Residues 15–22 (GTTNAGKS) are G1. 15-22 (GTTNAGKS) is a GTP binding site. A G2 region spans residues 41-45 (QTTRV). The tract at residues 62–65 (DTPG) is G3. GTP is bound by residues 62-66 (DTPGI) and 124-127 (NKID). The tract at residues 124 to 127 (NKID) is G4. Positions 153-155 (ISA) are G5. The KH type-2 domain maps to 205 to 282 (LHHELPYSLS…HLFLFVKVRE (78 aa)).

It belongs to the TRAFAC class TrmE-Era-EngA-EngB-Septin-like GTPase superfamily. Era GTPase family. Monomer.

The protein localises to the cytoplasm. It is found in the cell inner membrane. Functionally, an essential GTPase that binds both GDP and GTP, with rapid nucleotide exchange. Plays a role in 16S rRNA processing and 30S ribosomal subunit biogenesis and possibly also in cell cycle regulation and energy metabolism. In Ehrlichia canis (strain Jake), this protein is GTPase Era.